The sequence spans 133 residues: MDFVMKQALGGATKDMGKMLGGDEEKDPDAEKKEEERLEALRQAEEERAGKYAKMEAEREVMRQGIRDKYGIKKKEEKEAEAMAAMEAQAEGSLTRPKKAIPAGCGDEDEEEESILDTVLKYLPGPLQDMFKK.

Disordered stretches follow at residues 1 to 40 (MDFV…RLEA) and 85 to 112 (AMEA…DEEE). Residues 15–40 (DMGKMLGGDEEKDPDAEKKEEERLEA) are compositionally biased toward basic and acidic residues. A coiled-coil region spans residues 28–60 (PDAEKKEEERLEALRQAEEERAGKYAKMEAERE).

This sequence belongs to the complexin/synaphin family. Binds to the SNARE core complex containing SNAP25, VAMP2 and syntaxin-1. In terms of tissue distribution, nervous system. Present in electric organ (at protein level).

The protein resides in the cytoplasm. The protein localises to the cytosol. Its function is as follows. Positively regulates a late step in synaptic vesicle exocytosis. The chain is Complexin-1 from Narke japonica (Japanese sleeper ray).